Consider the following 127-residue polypeptide: Chorismate mutase AroH (127 aa).

A Chorismate mutase aroH-type domain is found at 3–121 (IRGIRGATTV…VVVLRPDLSL (119 aa)). Prephenate-binding positions include arginine 7, 74–78 (TCMQE), arginine 90, and tyrosine 108.

As to quaternary structure, homotrimer.

The protein resides in the cytoplasm. It carries out the reaction chorismate = prephenate. Its pathway is metabolic intermediate biosynthesis; prephenate biosynthesis; prephenate from chorismate: step 1/1. Functionally, catalyzes the Claisen rearrangement of chorismate to prephenate. Probably involved in the aromatic amino acid biosynthesis. In Bacillus subtilis (strain 168), this protein is Chorismate mutase AroH.